Here is a 340-residue protein sequence, read N- to C-terminus: Heat-inducible transcription repressor HrcA (340 aa).

This sequence belongs to the HrcA family.

In terms of biological role, negative regulator of class I heat shock genes (grpE-dnaK-dnaJ and groELS operons). Prevents heat-shock induction of these operons. The polypeptide is Heat-inducible transcription repressor HrcA (Mycoplasma capricolum subsp. capricolum (strain California kid / ATCC 27343 / NCTC 10154)).